Consider the following 93-residue polypeptide: Phosphoribosyl-ATP pyrophosphatase (93 aa).

The protein belongs to the PRA-PH family.

It localises to the cytoplasm. It carries out the reaction 1-(5-phospho-beta-D-ribosyl)-ATP + H2O = 1-(5-phospho-beta-D-ribosyl)-5'-AMP + diphosphate + H(+). Its pathway is amino-acid biosynthesis; L-histidine biosynthesis; L-histidine from 5-phospho-alpha-D-ribose 1-diphosphate: step 2/9. The protein is Phosphoribosyl-ATP pyrophosphatase of Mycolicibacterium paratuberculosis (strain ATCC BAA-968 / K-10) (Mycobacterium paratuberculosis).